We begin with the raw amino-acid sequence, 139 residues long: Protein archease (139 aa).

Ca(2+) contacts are provided by Asp12, Asp138, and Ile139.

Belongs to the archease family.

Activates the tRNA-splicing ligase complex by facilitating the enzymatic turnover of catalytic subunit RtcB. Acts by promoting the guanylylation of RtcB, a key intermediate step in tRNA ligation. Can also alter the NTP specificity of RtcB such that ATP, dGTP or ITP is used efficiently. The protein is Protein archease of Sulfurisphaera tokodaii (strain DSM 16993 / JCM 10545 / NBRC 100140 / 7) (Sulfolobus tokodaii).